The primary structure comprises 593 residues: V-type ATP synthase alpha chain (593 aa).

Residue 246 to 253 (GPFGAGKT) participates in ATP binding.

It belongs to the ATPase alpha/beta chains family.

The catalysed reaction is ATP + H2O + 4 H(+)(in) = ADP + phosphate + 5 H(+)(out). Functionally, produces ATP from ADP in the presence of a proton gradient across the membrane. The V-type alpha chain is a catalytic subunit. The polypeptide is V-type ATP synthase alpha chain (Protochlamydia amoebophila (strain UWE25)).